The following is a 1177-amino-acid chain: DNA-directed RNA polymerase subunit beta (1177 aa).

Residues 1–36 (MEGCILADSRQSKTAASPSPSRPQSSSNNSVPGAPN) are disordered. Residues 17–32 (SPSPSRPQSSSNNSVP) are compositionally biased toward low complexity.

The protein belongs to the RNA polymerase beta chain family. As to quaternary structure, the RNAP catalytic core consists of 2 alpha, 1 beta, 1 beta' and 1 omega subunit. When a sigma factor is associated with the core the holoenzyme is formed, which can initiate transcription.

It catalyses the reaction RNA(n) + a ribonucleoside 5'-triphosphate = RNA(n+1) + diphosphate. Its function is as follows. DNA-dependent RNA polymerase catalyzes the transcription of DNA into RNA using the four ribonucleoside triphosphates as substrates. The polypeptide is DNA-directed RNA polymerase subunit beta (Mycobacterium tuberculosis (strain ATCC 25177 / H37Ra)).